The sequence spans 278 residues: 3-methyl-2-oxobutanoate hydroxymethyltransferase (278 aa).

Residues aspartate 43 and aspartate 82 each contribute to the Mg(2+) site. Residues 43-44 (DS), aspartate 82, and lysine 112 each bind 3-methyl-2-oxobutanoate. Glutamate 114 contributes to the Mg(2+) binding site. The active-site Proton acceptor is the glutamate 181.

Belongs to the PanB family. In terms of assembly, homodecamer; pentamer of dimers. Requires Mg(2+) as cofactor.

It is found in the cytoplasm. It carries out the reaction 3-methyl-2-oxobutanoate + (6R)-5,10-methylene-5,6,7,8-tetrahydrofolate + H2O = 2-dehydropantoate + (6S)-5,6,7,8-tetrahydrofolate. It participates in cofactor biosynthesis; (R)-pantothenate biosynthesis; (R)-pantoate from 3-methyl-2-oxobutanoate: step 1/2. In terms of biological role, catalyzes the reversible reaction in which hydroxymethyl group from 5,10-methylenetetrahydrofolate is transferred onto alpha-ketoisovalerate to form ketopantoate. The polypeptide is 3-methyl-2-oxobutanoate hydroxymethyltransferase (Desulfitobacterium hafniense (strain Y51)).